The chain runs to 437 residues: Replication factor C large subunit (437 aa).

48-55 serves as a coordination point for ATP; sequence GPPGVGKT. The segment at 410–437 is disordered; the sequence is TQASKPTSEEKAEKSKKYYPKRSSSRKT. Over residues 416–425 the composition is skewed to basic and acidic residues; the sequence is TSEEKAEKSK. Positions 426-437 are enriched in basic residues; that stretch reads KYYPKRSSSRKT.

The protein belongs to the activator 1 small subunits family. RfcL subfamily. In terms of assembly, heteromultimer composed of small subunits (RfcS) and large subunits (RfcL).

Functionally, part of the RFC clamp loader complex which loads the PCNA sliding clamp onto DNA. In Sulfolobus acidocaldarius (strain ATCC 33909 / DSM 639 / JCM 8929 / NBRC 15157 / NCIMB 11770), this protein is Replication factor C large subunit.